The sequence spans 422 residues: Dipeptidase aclJ (422 aa).

Residues 28–45 (LAYSVTLTLVALFFTFAL) traverse the membrane as a helical segment. Zn(2+)-binding residues include His77 and Asp79. Residue Asn96 is glycosylated (N-linked (GlcNAc...) asparagine). A disulfide bond links Cys128 and Cys219. Residue Glu190 coordinates Zn(2+). A substrate-binding site is contributed by His217. An N-linked (GlcNAc...) asparagine glycan is attached at Asn270. A disulfide bridge links Cys287 with Cys319. Arg291 and Asp351 together coordinate substrate.

This sequence belongs to the metallo-dependent hydrolases superfamily. Peptidase M19 family. It depends on Zn(2+) as a cofactor.

It localises to the membrane. It carries out the reaction an L-aminoacyl-L-amino acid + H2O = 2 an L-alpha-amino acid. Its pathway is mycotoxin biosynthesis. Functionally, dipeptidase; part of the gene cluster that mediates the biosynthesis of aspirochlorine (or antibiotic A30641), an unusual halogenated spiro compound with distinctive antifungal properties due to selective inhibition of protein biosynthesis, and which is also active against bacteria, viruses, and murine tumor cells. The non-ribosomal peptide synthetase (NRPS) aclP is responsible the formation of the diketopiperazine (DKP) core from the condensation of 2 phenylalanine residues. One Phe residue is tailored into chlorotyrosine by hydroxylation and chlorination, whereas the second Phe undergoes an unprecedented C-C bond cleavage to be converted into glycine. After formation of the DKP, sulfur is incorporated into the DKP by conjugation with glutathione by aclG, followed by its stepwise degradation to the thiol by aclI, aclJ and aclK, and the dithiol oxidation by aclT. In addition, oxygenases (aclB, aclC, aclL and aclO) and O-methyltransferases (aclM and aclU) act as tailoring enzymes to produce the intermediate dechloroaspirochlorine. Ultimately, chlorination of dechloroaspirochlorine by the halogenase aclH is the last step in the aspirochlorine pathway. This Aspergillus oryzae (strain ATCC 42149 / RIB 40) (Yellow koji mold) protein is Dipeptidase aclJ.